Here is a 436-residue protein sequence, read N- to C-terminus: Xylose isomerase (436 aa).

Residues histidine 100 and aspartate 103 contribute to the active site. Mg(2+) contacts are provided by glutamate 231, glutamate 267, histidine 270, aspartate 295, aspartate 306, aspartate 308, and aspartate 338.

The protein belongs to the xylose isomerase family. Homotetramer. It depends on Mg(2+) as a cofactor.

Its subcellular location is the cytoplasm. The enzyme catalyses alpha-D-xylose = alpha-D-xylulofuranose. This Rhizobium etli (strain ATCC 51251 / DSM 11541 / JCM 21823 / NBRC 15573 / CFN 42) protein is Xylose isomerase.